The primary structure comprises 359 residues: Putative ankyrin repeat protein R190 (359 aa).

7 ANK repeats span residues 72-103, 105-133, 142-173, 203-234, 236-260, 261-287, and 288-317; these read RLMEIYHKMIIIDNNMDLLDLLFEIMSDDFRC, DCVILDLAIRHQRTDVFNKYIILGFDLNR, DEIILWYHQIKKYDTGIELCDYLIDNGASISI, LGNLLFWYLRNYYNVNIDIVETILSNGIDINN, HEYSYMLIGKFNVPIMNLFIRYGLI, IHDDVIDDACRYGNHLLVDYLMEIGHK, and PSKQIITNVIENHNVNIIKLFVKYNIDLSD.

This Acanthamoeba polyphaga (Amoeba) protein is Putative ankyrin repeat protein R190.